A 158-amino-acid chain; its full sequence is Cytochrome c-type biogenesis protein CcmE (158 aa).

Topologically, residues 1–7 (MKPRHRR) are cytoplasmic. The helical; Signal-anchor for type II membrane protein transmembrane segment at 8-28 (LTLIALVLGGLGLSAGLALTA) threads the bilayer. Residues 29–158 (FQDNLVFFFT…DGHPETTTAY (130 aa)) lie on the Periplasmic side of the membrane. Heme-binding residues include His-123 and Tyr-127. The interval 138 to 158 (RIGQGNGTPGPDGHPETTTAY) is disordered.

This sequence belongs to the CcmE/CycJ family.

The protein resides in the cell inner membrane. Heme chaperone required for the biogenesis of c-type cytochromes. Transiently binds heme delivered by CcmC and transfers the heme to apo-cytochromes in a process facilitated by CcmF and CcmH. The protein is Cytochrome c-type biogenesis protein CcmE of Alkalilimnicola ehrlichii (strain ATCC BAA-1101 / DSM 17681 / MLHE-1).